A 138-amino-acid chain; its full sequence is Small ribosomal subunit protein uS11c (138 aa).

Residues 1–23 are disordered; it reads MAKPIPRIGSRRNGRISSRKSTR. Residues 9-23 are compositionally biased toward basic residues; it reads GSRRNGRISSRKSTR.

It belongs to the universal ribosomal protein uS11 family. Part of the 30S ribosomal subunit.

The protein resides in the plastid. Its subcellular location is the chloroplast. The sequence is that of Small ribosomal subunit protein uS11c from Cucumis sativus (Cucumber).